A 277-amino-acid chain; its full sequence is Digeranylgeranylglyceryl phosphate synthase (277 aa).

8 consecutive transmembrane segments (helical) span residues 16-36 (LLAG…LPEL), 40-60 (ILVF…NDYF), 83-105 (AALW…INIW), 107-124 (FLLA…AWKL), 146-166 (GAIA…AFLV), 202-222 (VGAL…KAGI), 224-244 (LGYL…FLIL), and 256-276 (QILL…ASLV).

This sequence belongs to the UbiA prenyltransferase family. DGGGP synthase subfamily. Requires Mg(2+) as cofactor.

Its subcellular location is the cell membrane. The catalysed reaction is sn-3-O-(geranylgeranyl)glycerol 1-phosphate + (2E,6E,10E)-geranylgeranyl diphosphate = 2,3-bis-O-(geranylgeranyl)-sn-glycerol 1-phosphate + diphosphate. It functions in the pathway membrane lipid metabolism; glycerophospholipid metabolism. Prenyltransferase that catalyzes the transfer of the geranylgeranyl moiety of geranylgeranyl diphosphate (GGPP) to the C2 hydroxyl of (S)-3-O-geranylgeranylglyceryl phosphate (GGGP). This reaction is the second ether-bond-formation step in the biosynthesis of archaeal membrane lipids. This is Digeranylgeranylglyceryl phosphate synthase from Thermococcus kodakarensis (strain ATCC BAA-918 / JCM 12380 / KOD1) (Pyrococcus kodakaraensis (strain KOD1)).